The following is a 493-amino-acid chain: Alpha-amylase-related protein (493 aa).

An N-terminal signal peptide occupies residues 1 to 19 (MFKFALTQTLCLAGSLSLA). At glutamine 20 the chain carries Pyrrolidone carboxylic acid. A disulfide bond links cysteine 47 and cysteine 103. Ca(2+)-binding residues include asparagine 117, glutamine 168, and aspartate 177. A disulfide bridge connects residues cysteine 156 and cysteine 170. Arginine 205 serves as a coordination point for chloride. The Nucleophile role is filled by aspartate 207. Residue histidine 211 participates in Ca(2+) binding. Glutamate 244 serves as the catalytic Proton donor. Asparagine 307 and arginine 342 together coordinate chloride. 3 disulfide bridges follow: cysteine 375–cysteine 381, cysteine 417–cysteine 440, and cysteine 447–cysteine 459.

Belongs to the glycosyl hydrolase 13 family. Monomer. The cofactor is Ca(2+). Requires chloride as cofactor.

The protein localises to the secreted. It catalyses the reaction Endohydrolysis of (1-&gt;4)-alpha-D-glucosidic linkages in polysaccharides containing three or more (1-&gt;4)-alpha-linked D-glucose units.. The protein is Alpha-amylase-related protein (Amyrel) of Drosophila mauritiana (Fruit fly).